We begin with the raw amino-acid sequence, 300 residues long: Phosphatidylserine decarboxylase proenzyme (300 aa).

Active-site charge relay system; for autoendoproteolytic cleavage activity residues include D113, H169, and S256. S256 acts as the Schiff-base intermediate with substrate; via pyruvic acid; for decarboxylase activity in catalysis. A Pyruvic acid (Ser); by autocatalysis modification is found at S256.

The protein belongs to the phosphatidylserine decarboxylase family. PSD-B subfamily. Prokaryotic type II sub-subfamily. Heterodimer of a large membrane-associated beta subunit and a small pyruvoyl-containing alpha subunit. The cofactor is pyruvate. Is synthesized initially as an inactive proenzyme. Formation of the active enzyme involves a self-maturation process in which the active site pyruvoyl group is generated from an internal serine residue via an autocatalytic post-translational modification. Two non-identical subunits are generated from the proenzyme in this reaction, and the pyruvate is formed at the N-terminus of the alpha chain, which is derived from the carboxyl end of the proenzyme. The autoendoproteolytic cleavage occurs by a canonical serine protease mechanism, in which the side chain hydroxyl group of the serine supplies its oxygen atom to form the C-terminus of the beta chain, while the remainder of the serine residue undergoes an oxidative deamination to produce ammonia and the pyruvoyl prosthetic group on the alpha chain. During this reaction, the Ser that is part of the protease active site of the proenzyme becomes the pyruvoyl prosthetic group, which constitutes an essential element of the active site of the mature decarboxylase.

The protein localises to the cell membrane. It catalyses the reaction a 1,2-diacyl-sn-glycero-3-phospho-L-serine + H(+) = a 1,2-diacyl-sn-glycero-3-phosphoethanolamine + CO2. It functions in the pathway phospholipid metabolism; phosphatidylethanolamine biosynthesis; phosphatidylethanolamine from CDP-diacylglycerol: step 2/2. Its function is as follows. Catalyzes the formation of phosphatidylethanolamine (PtdEtn) from phosphatidylserine (PtdSer). The sequence is that of Phosphatidylserine decarboxylase proenzyme from Ruminiclostridium cellulolyticum (strain ATCC 35319 / DSM 5812 / JCM 6584 / H10) (Clostridium cellulolyticum).